The primary structure comprises 124 residues: Small ribosomal subunit protein uS12 (124 aa).

Asp89 bears the 3-methylthioaspartic acid mark. The disordered stretch occupies residues 103 to 124 (DTAGVQNRNRGRSKYGAKRPKK). The segment covering 111 to 124 (NRGRSKYGAKRPKK) has biased composition (basic residues).

This sequence belongs to the universal ribosomal protein uS12 family. In terms of assembly, part of the 30S ribosomal subunit. Contacts proteins S8 and S17. May interact with IF1 in the 30S initiation complex.

Functionally, with S4 and S5 plays an important role in translational accuracy. In terms of biological role, interacts with and stabilizes bases of the 16S rRNA that are involved in tRNA selection in the A site and with the mRNA backbone. Located at the interface of the 30S and 50S subunits, it traverses the body of the 30S subunit contacting proteins on the other side and probably holding the rRNA structure together. The combined cluster of proteins S8, S12 and S17 appears to hold together the shoulder and platform of the 30S subunit. The polypeptide is Small ribosomal subunit protein uS12 (Desulforudis audaxviator (strain MP104C)).